We begin with the raw amino-acid sequence, 209 residues long: Pyridoxine/pyridoxamine 5'-phosphate oxidase (209 aa).

FMN is bound by residues 57 to 62 (RMVLLK), 72 to 73 (YT), Lys79, and Gln101. Lys62 contacts substrate. Substrate is bound by residues Tyr119, Arg123, and Ser127. FMN contacts are provided by residues 136–137 (QS) and Trp181. Position 187–189 (187–189 (RLH)) interacts with substrate. FMN is bound at residue Arg191.

The protein belongs to the pyridoxamine 5'-phosphate oxidase family. As to quaternary structure, homodimer. FMN serves as cofactor.

The catalysed reaction is pyridoxamine 5'-phosphate + O2 + H2O = pyridoxal 5'-phosphate + H2O2 + NH4(+). The enzyme catalyses pyridoxine 5'-phosphate + O2 = pyridoxal 5'-phosphate + H2O2. It functions in the pathway cofactor metabolism; pyridoxal 5'-phosphate salvage; pyridoxal 5'-phosphate from pyridoxamine 5'-phosphate: step 1/1. The protein operates within cofactor metabolism; pyridoxal 5'-phosphate salvage; pyridoxal 5'-phosphate from pyridoxine 5'-phosphate: step 1/1. In terms of biological role, catalyzes the oxidation of either pyridoxine 5'-phosphate (PNP) or pyridoxamine 5'-phosphate (PMP) into pyridoxal 5'-phosphate (PLP). The sequence is that of Pyridoxine/pyridoxamine 5'-phosphate oxidase from Chelativorans sp. (strain BNC1).